Reading from the N-terminus, the 566-residue chain is CTP synthase (566 aa).

Residues 1–282 (MSIKRAQLGG…DAYIIDQLGL (282 aa)) form an amidoligase domain region. A CTP-binding site is contributed by serine 23. Serine 23 contributes to the UTP binding site. Residues 24–29 (SLGKGL) and aspartate 81 each bind ATP. Residues aspartate 81 and glutamate 156 each coordinate Mg(2+). Residues 163–165 (DIE), 203–208 (KTKPTQ), and lysine 239 each bind CTP. Residues 203–208 (KTKPTQ) and lysine 239 contribute to the UTP site. A Glutamine amidotransferase type-1 domain is found at 308 to 556 (TIGLVGKYID…IGAALDRQKA (249 aa)). Position 371 (glycine 371) interacts with L-glutamine. The Nucleophile; for glutamine hydrolysis role is filled by cysteine 398. L-glutamine contacts are provided by residues 399–402 (LGLQ), glutamate 422, and arginine 482. Catalysis depends on residues histidine 529 and glutamate 531.

This sequence belongs to the CTP synthase family. In terms of assembly, homotetramer.

It catalyses the reaction UTP + L-glutamine + ATP + H2O = CTP + L-glutamate + ADP + phosphate + 2 H(+). It carries out the reaction L-glutamine + H2O = L-glutamate + NH4(+). The enzyme catalyses UTP + NH4(+) + ATP = CTP + ADP + phosphate + 2 H(+). It participates in pyrimidine metabolism; CTP biosynthesis via de novo pathway; CTP from UDP: step 2/2. Allosterically activated by GTP, when glutamine is the substrate; GTP has no effect on the reaction when ammonia is the substrate. The allosteric effector GTP functions by stabilizing the protein conformation that binds the tetrahedral intermediate(s) formed during glutamine hydrolysis. Inhibited by the product CTP, via allosteric rather than competitive inhibition. Catalyzes the ATP-dependent amination of UTP to CTP with either L-glutamine or ammonia as the source of nitrogen. Regulates intracellular CTP levels through interactions with the four ribonucleotide triphosphates. The chain is CTP synthase from Leifsonia xyli subsp. xyli (strain CTCB07).